Here is a 260-residue protein sequence, read N- to C-terminus: uncharacterized protein (260 aa).

A coiled-coil region spans residues 214–252 (IHQFIETEIERIMEAAKELKAEKKDMTSELNRLLLNTVE).

This is an uncharacterized protein from Bacillus subtilis (strain 168).